The primary structure comprises 197 residues: 3-isopropylmalate dehydratase small subunit (197 aa).

The protein belongs to the LeuD family. LeuD type 1 subfamily. In terms of assembly, heterodimer of LeuC and LeuD.

The catalysed reaction is (2R,3S)-3-isopropylmalate = (2S)-2-isopropylmalate. The protein operates within amino-acid biosynthesis; L-leucine biosynthesis; L-leucine from 3-methyl-2-oxobutanoate: step 2/4. Functionally, catalyzes the isomerization between 2-isopropylmalate and 3-isopropylmalate, via the formation of 2-isopropylmaleate. The polypeptide is 3-isopropylmalate dehydratase small subunit (Mycolicibacterium vanbaalenii (strain DSM 7251 / JCM 13017 / BCRC 16820 / KCTC 9966 / NRRL B-24157 / PYR-1) (Mycobacterium vanbaalenii)).